Reading from the N-terminus, the 793-residue chain is von Willebrand factor A domain-containing protein 5A (793 aa).

Residues 1 to 131 enclose the VIT domain; the sequence is MEHHCGLITS…KVAVTLRYVQ (131 aa). The 189-residue stretch at 281-469 folds into the VWFA domain; sequence EFVFLMDRSG…FALQCAVDNI (189 aa). Position 622 is a phosphotyrosine (Tyr622).

Functionally, may play a role in tumorigenesis as a tumor suppressor. Altered expression of this protein and disruption of the molecular pathway it is involved in may contribute directly to or modify tumorigenesis. The chain is von Willebrand factor A domain-containing protein 5A (Vwa5a) from Mus musculus (Mouse).